The chain runs to 217 residues: Small ribosomal subunit protein uS3 (217 aa).

A KH type-2 domain is found at 38 to 106 (IRKFVQKELA…QVHINIIEIK (69 aa)).

This sequence belongs to the universal ribosomal protein uS3 family. Part of the 30S ribosomal subunit. Forms a tight complex with proteins S10 and S14.

In terms of biological role, binds the lower part of the 30S subunit head. Binds mRNA in the 70S ribosome, positioning it for translation. In Streptococcus sanguinis (strain SK36), this protein is Small ribosomal subunit protein uS3.